The chain runs to 359 residues: Protein RecA (359 aa).

69-76 (GPESSGKT) provides a ligand contact to ATP. The tract at residues 337–359 (SANSVAKASEEDEEEEVDLEPEE) is disordered. The segment covering 346-359 (EEDEEEEVDLEPEE) has biased composition (acidic residues).

This sequence belongs to the RecA family.

The protein localises to the cytoplasm. Can catalyze the hydrolysis of ATP in the presence of single-stranded DNA, the ATP-dependent uptake of single-stranded DNA by duplex DNA, and the ATP-dependent hybridization of homologous single-stranded DNAs. It interacts with LexA causing its activation and leading to its autocatalytic cleavage. The sequence is that of Protein RecA from Nostoc punctiforme (strain ATCC 29133 / PCC 73102).